Reading from the N-terminus, the 108-residue chain is Nitrite reductase (NADH) small subunit (108 aa).

Associates with NirB.

The protein localises to the cytoplasm. It carries out the reaction NH4(+) + 3 NAD(+) + 2 H2O = nitrite + 3 NADH + 5 H(+). Required for activity of the reductase. This is Nitrite reductase (NADH) small subunit (nirD) from Salmonella typhi.